The following is a 366-amino-acid chain: Nodulation protein NolL (366 aa).

9 helical membrane passes run 27 to 47 (FVKGILIILVVLGHLLQLVIY), 62 to 82 (IYMFHMPLFMAISGYLASGTI), 98 to 118 (LLIPMLFWCALIETAKLAAFF), 140 to 160 (FLWAVLASFLLTKLFAAFNLL), 164 to 184 (ILCASAIVIALMPITLSIVPL), 212 to 232 (HKSLLMFSCWAVACLCFLDWG), 253 to 273 (VLLMFTGSAAAAAVAAQSLFH), 286 to 306 (LVAVELGQSTLLLYLVQGAVF), and 324 to 344 (IVVASAIGAAIFGAATAVLWI).

It belongs to the acyltransferase 3 family.

It localises to the cell membrane. Functionally, thought to be an acetyltransferase that modifies the fucose of the nod factor. The protein is Nodulation protein NolL (nolL) of Sinorhizobium fredii (strain NBRC 101917 / NGR234).